The chain runs to 444 residues: Probable glycine dehydrogenase (decarboxylating) subunit 1 (444 aa).

Belongs to the GcvP family. N-terminal subunit subfamily. The glycine cleavage system is composed of four proteins: P, T, L and H. In this organism, the P 'protein' is a heterodimer of two subunits.

It catalyses the reaction N(6)-[(R)-lipoyl]-L-lysyl-[glycine-cleavage complex H protein] + glycine + H(+) = N(6)-[(R)-S(8)-aminomethyldihydrolipoyl]-L-lysyl-[glycine-cleavage complex H protein] + CO2. Its function is as follows. The glycine cleavage system catalyzes the degradation of glycine. The P protein binds the alpha-amino group of glycine through its pyridoxal phosphate cofactor; CO(2) is released and the remaining methylamine moiety is then transferred to the lipoamide cofactor of the H protein. This is Probable glycine dehydrogenase (decarboxylating) subunit 1 from Prosthecochloris aestuarii (strain DSM 271 / SK 413).